The following is a 277-amino-acid chain: Shikimate dehydrogenase (NADP(+)) (277 aa).

Shikimate-binding positions include 14–16 (SKS) and Thr61. Lys65 functions as the Proton acceptor in the catalytic mechanism. Residue Asp77 participates in NADP(+) binding. Residues Asn86 and Asp102 each coordinate shikimate. NADP(+) is bound by residues 127 to 131 (GAGGA), 151 to 156 (NRTPDK), and Met215. Tyr217 is a shikimate binding site. Gly239 contacts NADP(+).

It belongs to the shikimate dehydrogenase family. Homodimer.

The enzyme catalyses shikimate + NADP(+) = 3-dehydroshikimate + NADPH + H(+). Its pathway is metabolic intermediate biosynthesis; chorismate biosynthesis; chorismate from D-erythrose 4-phosphate and phosphoenolpyruvate: step 4/7. Functionally, involved in the biosynthesis of the chorismate, which leads to the biosynthesis of aromatic amino acids. Catalyzes the reversible NADPH linked reduction of 3-dehydroshikimate (DHSA) to yield shikimate (SA). The chain is Shikimate dehydrogenase (NADP(+)) from Nitrosomonas eutropha (strain DSM 101675 / C91 / Nm57).